We begin with the raw amino-acid sequence, 350 residues long: DNA-directed RNA polymerase subunit alpha (350 aa).

The alpha N-terminal domain (alpha-NTD) stretch occupies residues 1–226 (MLISQRPTLS…ELFGLARELN (226 aa)). The alpha C-terminal domain (alpha-CTD) stretch occupies residues 241 to 350 (ADHIASFALP…NQDYAETEQL (110 aa)). Positions 328-350 (GTWTSDAGYDLDDNQDYAETEQL) are disordered. Over residues 336-350 (YDLDDNQDYAETEQL) the composition is skewed to acidic residues.

The protein belongs to the RNA polymerase alpha chain family. As to quaternary structure, homodimer. The RNAP catalytic core consists of 2 alpha, 1 beta, 1 beta' and 1 omega subunit. When a sigma factor is associated with the core the holoenzyme is formed, which can initiate transcription.

It catalyses the reaction RNA(n) + a ribonucleoside 5'-triphosphate = RNA(n+1) + diphosphate. Its function is as follows. DNA-dependent RNA polymerase catalyzes the transcription of DNA into RNA using the four ribonucleoside triphosphates as substrates. This is DNA-directed RNA polymerase subunit alpha from Mycolicibacterium smegmatis (strain ATCC 700084 / mc(2)155) (Mycobacterium smegmatis).